Consider the following 175-residue polypeptide: MSRVAKKPVSLPKGVELNVQPGLVSVKGPKGTLTLPKPAGVEIAIDGGVATLSANDPSQIALTGTVRAILANMVKGVSEGFERKLELVGVGYRAAMQGKDLSLALGFSHPLVFVAPEGITLSTPTQTEIVVQGADKQRVGEVAAKIRGFRPPEPYKGKGVKYAGEVIIRKEAKKA.

This sequence belongs to the universal ribosomal protein uL6 family. As to quaternary structure, part of the 50S ribosomal subunit.

In terms of biological role, this protein binds to the 23S rRNA, and is important in its secondary structure. It is located near the subunit interface in the base of the L7/L12 stalk, and near the tRNA binding site of the peptidyltransferase center. The chain is Large ribosomal subunit protein uL6 from Xanthomonas axonopodis pv. citri (strain 306).